The primary structure comprises 1258 residues: Cohesin subunit SA-1 (1258 aa).

The tract at residues 1-59 is disordered; that stretch reads MITSELPVLQDSTNETTAHSDAGSELEETEVKGKRKRGRPGRPPSTNKKPRKSPGEKSR. The segment covering 10 to 19 has biased composition (polar residues); it reads QDSTNETTAH. S24 bears the Phosphoserine mark. The SCD domain maps to 296 to 381; the sequence is FVHRYRDAIA…NRFKDRIVSM (86 aa). Phosphoserine is present on residues S756, S1062, and S1065. Residues 1055–1148 are disordered; it reads GGEDDRMSVN…EHGSEPDFLH (94 aa). Over residues 1062–1075 the composition is skewed to low complexity; it reads SVNSGSSSSKTSSV. The segment covering 1076–1087 has biased composition (basic residues); the sequence is RSKKGRPPLHRK. Position 1093 is a phosphoserine (S1093). Polar residues predominate over residues 1095–1106; that stretch reads DNTWLNRTDTMI. Over residues 1137–1146 the composition is skewed to basic and acidic residues; that stretch reads ESEHGSEPDF. K1161 is covalently cross-linked (Glycyl lysine isopeptide (Lys-Gly) (interchain with G-Cter in SUMO2)).

Belongs to the SCC3 family. In terms of assembly, cohesin complexes are composed of a heterodimer between a SMC1 protein (SMC1A or SMC1B) and SMC3, which are attached via their hinge domain, and RAD21 which link them at their heads, and one STAG protein (STAG1, STAG2 or STAG3). In cohesin complexes, STAG1 is mutually exclusive with STAG2 and STAG3. Interacts directly with RAD21 in cohesin complex. The cohesin complex interacts with the cohesin loading complex subunits NIPBL/Scc2 (via HEAT repeats) and MAU2/Scc4. NIPBL directly contacts all members of the complex, RAD21, SMC1A/B, SMC3 and STAG1. Phosphorylated by PLK1. The large dissociation of cohesin from chromosome arms during prophase is partly due to its phosphorylation.

It is found in the nucleus. The protein localises to the chromosome. Functionally, component of cohesin complex, a complex required for the cohesion of sister chromatids after DNA replication. The cohesin complex apparently forms a large proteinaceous ring within which sister chromatids can be trapped. At anaphase, the complex is cleaved and dissociates from chromatin, allowing sister chromatids to segregate. The cohesin complex may also play a role in spindle pole assembly during mitosis. This Mus musculus (Mouse) protein is Cohesin subunit SA-1 (Stag1).